A 513-amino-acid chain; its full sequence is Serine/threonine-protein kinase PBL27 (513 aa).

The disordered stretch occupies residues 1–61 (MSGCLPCFGS…KKELTAPKEG (61 aa)). S-palmitoyl cysteine attachment occurs at residues Cys-4 and Cys-7. Basic and acidic residues-rich tracts occupy residues 15–27 (AASK…ELSA) and 38–57 (ISLD…ELTA). Residues 83 to 360 (FRPECLLGEG…GDVVTALTYL (278 aa)) form the Protein kinase domain. ATP is bound by residues 89–97 (LGEGGFGRV) and Lys-112. Asp-210 functions as the Proton acceptor in the catalytic mechanism. Ser-244 carries the phosphoserine; by CERK1 modification. Residues Thr-245 and Thr-250 each carry the phosphothreonine; by CERK1 modification. Over residues 365 to 378 (FDPNAPSGQNSRSG) the composition is skewed to polar residues. A disordered region spans residues 365–513 (FDPNAPSGQN…GPGSFDSTND (149 aa)). Ser-392 and Ser-401 each carry phosphoserine. The segment covering 417–428 (NSPDYRRRDMVR) has biased composition (basic and acidic residues). Positions 434-446 (SEGGSETGGGSGR) are enriched in gly residues. Over residues 456 to 473 (QESQRGSPASVGRSSRGT) the composition is skewed to polar residues. The span at 475–486 (RNRDLDRERAVA) shows a compositional bias: basic and acidic residues. Over residues 504–513 (GPGSFDSTND) the composition is skewed to polar residues.

This sequence belongs to the protein kinase superfamily. Ser/Thr protein kinase family. As to quaternary structure, interacts with CERK1 (preferentially unphosphorylated) at the plasma membrane. Binds to MAPKKK5 at the plasma membrane; disassociation is induced by chitin perception by the CERK1 complex. Also associates with MAPKKK3. Post-translationally, phosphorylated by CERK1 upon elicitation by chitin. In terms of processing, palmitoylation at Cys-4 and Cys-7 are required for plasma membrane location.

Its subcellular location is the cell membrane. The catalysed reaction is L-seryl-[protein] + ATP = O-phospho-L-seryl-[protein] + ADP + H(+). It carries out the reaction L-threonyl-[protein] + ATP = O-phospho-L-threonyl-[protein] + ADP + H(+). Functionally, receptor-like cytoplasmic kinase involved in the transduction of signal between the host cell surface chitin receptor complex CERK1-LYK5 and the intracellular MAPKKK5-dependent mitogen-activated protein kinase (MAPK) cascade that leads to chitin-induced immunity. Phosphorylates and activates MAPKKK5 when phosphorylated by CERK1 after elicitation by chitin. The protein is Serine/threonine-protein kinase PBL27 of Arabidopsis thaliana (Mouse-ear cress).